Here is an 888-residue protein sequence, read N- to C-terminus: Protein translocase subunit SecA (888 aa).

Residues Gln-81, 99-103 (GEGKT), and Asp-489 contribute to the ATP site.

This sequence belongs to the SecA family.

The protein resides in the plastid. It localises to the chloroplast stroma. It is found in the chloroplast thylakoid membrane. It catalyses the reaction ATP + H2O + cellular proteinSide 1 = ADP + phosphate + cellular proteinSide 2.. Its function is as follows. Has a central role in coupling the hydrolysis of ATP to the transfer of proteins across the thylakoid membrane. The protein is Protein translocase subunit SecA of Trieres chinensis (Marine centric diatom).